Reading from the N-terminus, the 208-residue chain is Putative 3-methyladenine DNA glycosylase (208 aa).

This sequence belongs to the DNA glycosylase MPG family.

The chain is Putative 3-methyladenine DNA glycosylase from Prosthecochloris aestuarii (strain DSM 271 / SK 413).